A 340-amino-acid chain; its full sequence is Uroporphyrinogen decarboxylase (340 aa).

Residues 23-27 (RQAGR), aspartate 72, tyrosine 147, threonine 202, and histidine 316 contribute to the substrate site.

This sequence belongs to the uroporphyrinogen decarboxylase family. Homodimer.

Its subcellular location is the cytoplasm. The catalysed reaction is uroporphyrinogen III + 4 H(+) = coproporphyrinogen III + 4 CO2. Its pathway is porphyrin-containing compound metabolism; protoporphyrin-IX biosynthesis; coproporphyrinogen-III from 5-aminolevulinate: step 4/4. Its function is as follows. Catalyzes the decarboxylation of four acetate groups of uroporphyrinogen-III to yield coproporphyrinogen-III. The sequence is that of Uroporphyrinogen decarboxylase from Geobacter metallireducens (strain ATCC 53774 / DSM 7210 / GS-15).